We begin with the raw amino-acid sequence, 505 residues long: Photosystem II CP47 reaction center protein (505 aa).

Residues 1-19 (GLPWYRVHTVLINDPGRLI) are Cytoplasmic-facing. The chlorophyll a site is built by H8, H22, H25, H99, and H113. A helical membrane pass occupies residues 20 to 35 (AAHLMHTALVAGWAGS). At 36–99 (MALYELATFD…WSFEGVALAH (64 aa)) the chain is on the lumenal side. Residues 100 to 114 (IVLSGLLFLAACWHW) form a helical membrane-spanning segment. The Cytoplasmic segment spans residues 115-138 (VYWDLELFRDPRTGEPALDLPKMF). The chain crosses the membrane as a helical span at residues 139–155 (GIHLFLAGLLCFGFGAF). Residues H141, H156, H200, H201, and H215 each contribute to the chlorophyll a site. Residues 156–201 (HLTGLFGPGMWVSDPYGLTGSVQPVAPEWGPDGFNPYNPGGVVAHH) lie on the Lumenal side of the membrane. The helical transmembrane segment at 202 to 217 (IAAGIVGIIAGLFHIL) threads the bilayer. The Cytoplasmic portion of the chain corresponds to 218–235 (VRPPQRLYKALRMGNIET). Residues 236–251 (VLSSSIAAVFFAAFVV) traverse the membrane as a helical segment. The Lumenal portion of the chain corresponds to 252–455 (AGTMWYGSAT…PRGWFTFAHA (204 aa)). H454, H465, and H468 together coordinate chlorophyll a. A helical transmembrane segment spans residues 456 to 471 (VFALLFFFGHIWHGAR). Residues 472–505 (TLFRDVFSGIDPELSPEQVEWGFYQKVGDVTTRK) lie on the Cytoplasmic side of the membrane.

Belongs to the PsbB/PsbC family. PsbB subfamily. In terms of assembly, PSII is composed of 1 copy each of membrane proteins PsbA, PsbB, PsbC, PsbD, PsbE, PsbF, PsbH, PsbI, PsbJ, PsbK, PsbL, PsbM, PsbT, PsbX, PsbY, PsbZ, Psb30/Ycf12, peripheral proteins PsbO, CyanoQ (PsbQ), PsbU, PsbV and a large number of cofactors. It forms dimeric complexes. Requires Binds multiple chlorophylls. PSII binds additional chlorophylls, carotenoids and specific lipids. as cofactor.

It is found in the cellular thylakoid membrane. One of the components of the core complex of photosystem II (PSII). It binds chlorophyll and helps catalyze the primary light-induced photochemical processes of PSII. PSII is a light-driven water:plastoquinone oxidoreductase, using light energy to abstract electrons from H(2)O, generating O(2) and a proton gradient subsequently used for ATP formation. The sequence is that of Photosystem II CP47 reaction center protein from Thermostichus vulcanus (Synechococcus vulcanus).